Consider the following 426-residue polypeptide: Serine hydroxymethyltransferase (426 aa).

Residues Leu118 and 122-124 contribute to the (6S)-5,6,7,8-tetrahydrofolate site; that span reads GHL. An N6-(pyridoxal phosphate)lysine modification is found at Lys227.

The protein belongs to the SHMT family. Homodimer. Requires pyridoxal 5'-phosphate as cofactor.

It is found in the cytoplasm. The catalysed reaction is (6R)-5,10-methylene-5,6,7,8-tetrahydrofolate + glycine + H2O = (6S)-5,6,7,8-tetrahydrofolate + L-serine. Its pathway is one-carbon metabolism; tetrahydrofolate interconversion. The protein operates within amino-acid biosynthesis; glycine biosynthesis; glycine from L-serine: step 1/1. In terms of biological role, catalyzes the reversible interconversion of serine and glycine with tetrahydrofolate (THF) serving as the one-carbon carrier. This reaction serves as the major source of one-carbon groups required for the biosynthesis of purines, thymidylate, methionine, and other important biomolecules. Also exhibits THF-independent aldolase activity toward beta-hydroxyamino acids, producing glycine and aldehydes, via a retro-aldol mechanism. In Mycolicibacterium paratuberculosis (strain ATCC BAA-968 / K-10) (Mycobacterium paratuberculosis), this protein is Serine hydroxymethyltransferase.